The chain runs to 1370 residues: DNA-directed RNA polymerase subunit beta (1370 aa).

Belongs to the RNA polymerase beta chain family. The RNAP catalytic core consists of 2 alpha, 1 beta, 1 beta' and 1 omega subunit. When a sigma factor is associated with the core the holoenzyme is formed, which can initiate transcription.

The catalysed reaction is RNA(n) + a ribonucleoside 5'-triphosphate = RNA(n+1) + diphosphate. In terms of biological role, DNA-dependent RNA polymerase catalyzes the transcription of DNA into RNA using the four ribonucleoside triphosphates as substrates. The polypeptide is DNA-directed RNA polymerase subunit beta (Delftia acidovorans (strain DSM 14801 / SPH-1)).